The chain runs to 79 residues: Probable Fe(2+)-trafficking protein (79 aa).

It belongs to the Fe(2+)-trafficking protein family. As to quaternary structure, monomer.

Could be a mediator in iron transactions between iron acquisition and iron-requiring processes, such as synthesis and/or repair of Fe-S clusters in biosynthetic enzymes. This Blochmanniella floridana protein is Probable Fe(2+)-trafficking protein.